We begin with the raw amino-acid sequence, 173 residues long: NADH-ubiquinone oxidoreductase chain 6 (173 aa).

5 helical membrane passes run Met-1–Ser-21, Tyr-27–Gly-47, Val-48–Val-68, Gly-91–Leu-111, and Val-141–Leu-161.

Belongs to the complex I subunit 6 family.

It is found in the mitochondrion membrane. The catalysed reaction is a ubiquinone + NADH + 5 H(+)(in) = a ubiquinol + NAD(+) + 4 H(+)(out). Functionally, core subunit of the mitochondrial membrane respiratory chain NADH dehydrogenase (Complex I) that is believed to belong to the minimal assembly required for catalysis. Complex I functions in the transfer of electrons from NADH to the respiratory chain. The immediate electron acceptor for the enzyme is believed to be ubiquinone. The sequence is that of NADH-ubiquinone oxidoreductase chain 6 (MT-ND6) from Fratercula arctica (Atlantic puffin).